The following is a 64-amino-acid chain: H/ACA ribonucleoprotein complex subunit 3-like protein (64 aa).

The protein belongs to the NOP10 family. As to quaternary structure, component of the small nucleolar ribonucleoprotein particles containing H/ACA-type snoRNAs (H/ACA snoRNPs).

The protein localises to the nucleus. It localises to the nucleolus. Functionally, required for ribosome biogenesis. Part of a complex which catalyzes pseudouridylation of rRNA. This involves the isomerization of uridine such that the ribose is subsequently attached to C5, instead of the normal N1. Pseudouridine ('psi') residues may serve to stabilize the conformation of rRNAs. The polypeptide is H/ACA ribonucleoprotein complex subunit 3-like protein (Arabidopsis thaliana (Mouse-ear cress)).